The following is a 1404-amino-acid chain: Clustered mitochondria protein homolog (1404 aa).

Residues 357–646 (HTHHADALRS…RLNPVDINWL (290 aa)) form the Clu domain. Positions 528-540 (ADELPEADGETTE) are enriched in acidic residues. 4 disordered regions span residues 528 to 561 (ADELPEADGETTELAEAAPEKKSPEAKLAQSNKA), 706 to 735 (DAKAKEAASKEDGEKTEAPEVEAEEPERLD), 996 to 1046 (GCHG…ARAT), and 1337 to 1372 (SERQARLPASRRGNSNAGGGAAAITGAGTTASGNGT). Residues 706–723 (DAKAKEAASKEDGEKTEA) are compositionally biased toward basic and acidic residues. 2 stretches are compositionally biased toward low complexity: residues 1021 to 1046 (NEQQNGVKKSNVGAAAAKPTKAARAT) and 1358 to 1372 (AAITGAGTTASGNGT).

This sequence belongs to the CLU family. May associate with the eukaryotic translation initiation factor 3 (eIF-3) complex.

Its subcellular location is the cytoplasm. MRNA-binding protein involved in proper cytoplasmic distribution of mitochondria. This Mycosarcoma maydis (Corn smut fungus) protein is Clustered mitochondria protein homolog.